Consider the following 315-residue polypeptide: Olfactory receptor 3A1 (315 aa).

Residues 1 to 28 (MQPESGANGTVIAEFILLGLLEAPGLQP) lie on the Extracellular side of the membrane. N-linked (GlcNAc...) asparagine glycosylation is present at N8. A helical membrane pass occupies residues 29 to 52 (VVFVLFLFAYLVTVGGNLSILAAV). Residues 53–60 (LVEPELHT) are Cytoplasmic-facing. A helical membrane pass occupies residues 61–82 (PMYFFLGNLSVLDVGCISVTVP). Topologically, residues 83 to 103 (SMLSRLLSRKRAVPCGACLTQ) are extracellular. C100 and C192 are oxidised to a cystine. Residues 104 to 123 (LFFFHLFVGVDCFLLIAMAY) form a helical membrane-spanning segment. The Cytoplasmic segment spans residues 124–143 (DRFLAICRPLTYSTRMSQTV). A helical membrane pass occupies residues 144 to 161 (QRMLVAASWACAFTNALT). The Extracellular portion of the chain corresponds to 162-199 (HTVAMSTLNFCGPNVINHFYCDLPQLCQLSCSSTQLSE). The helical transmembrane segment at 200-223 (LLLFAVGFIMAGTSMALIVISYIH) threads the bilayer. At 224-240 (VAAAVLRIRSVEGRKKA) the chain is on the cytoplasmic side. Residues 241–264 (FSTCGSHLTVVAIFYGSGIFNYMR) traverse the membrane as a helical segment. Residues 265-275 (LGSTKLSDKDK) lie on the Extracellular side of the membrane. A helical membrane pass occupies residues 276–295 (AVGIFNTVINPMLNPIIYSF). Topologically, residues 296-315 (RNPDVQSAIWRMLTGRRSLA) are cytoplasmic.

It belongs to the G-protein coupled receptor 1 family.

It localises to the cell membrane. Its function is as follows. Odorant receptor. This chain is Olfactory receptor 3A1 (OR3A1), found in Gorilla gorilla gorilla (Western lowland gorilla).